The sequence spans 702 residues: Polyribonucleotide nucleotidyltransferase 1 (702 aa).

Asp483 and Asp489 together coordinate Mg(2+). Positions Pro550 to Ile609 constitute a KH domain. Residues Gly619–Lys687 enclose the S1 motif domain.

The protein belongs to the polyribonucleotide nucleotidyltransferase family. Requires Mg(2+) as cofactor.

It localises to the cytoplasm. The enzyme catalyses RNA(n+1) + phosphate = RNA(n) + a ribonucleoside 5'-diphosphate. Its function is as follows. Involved in mRNA degradation. Catalyzes the phosphorolysis of single-stranded polyribonucleotides processively in the 3'- to 5'-direction. This is Polyribonucleotide nucleotidyltransferase 1 from Alkaliphilus metalliredigens (strain QYMF).